Here is a 197-residue protein sequence, read N- to C-terminus: Large ribosomal subunit protein bL25 (197 aa).

Belongs to the bacterial ribosomal protein bL25 family. CTC subfamily. Part of the 50S ribosomal subunit; part of the 5S rRNA/L5/L18/L25 subcomplex. Contacts the 5S rRNA. Binds to the 5S rRNA independently of L5 and L18.

Its function is as follows. This is one of the proteins that binds to the 5S RNA in the ribosome where it forms part of the central protuberance. In Citrifermentans bemidjiense (strain ATCC BAA-1014 / DSM 16622 / JCM 12645 / Bem) (Geobacter bemidjiensis), this protein is Large ribosomal subunit protein bL25.